The chain runs to 284 residues: Bifunctional protein FolD (284 aa).

NADP(+) contacts are provided by residues 166–168 (GAS) and Ile-232.

This sequence belongs to the tetrahydrofolate dehydrogenase/cyclohydrolase family. As to quaternary structure, homodimer.

It catalyses the reaction (6R)-5,10-methylene-5,6,7,8-tetrahydrofolate + NADP(+) = (6R)-5,10-methenyltetrahydrofolate + NADPH. The catalysed reaction is (6R)-5,10-methenyltetrahydrofolate + H2O = (6R)-10-formyltetrahydrofolate + H(+). It participates in one-carbon metabolism; tetrahydrofolate interconversion. Catalyzes the oxidation of 5,10-methylenetetrahydrofolate to 5,10-methenyltetrahydrofolate and then the hydrolysis of 5,10-methenyltetrahydrofolate to 10-formyltetrahydrofolate. This is Bifunctional protein FolD from Shewanella pealeana (strain ATCC 700345 / ANG-SQ1).